The chain runs to 590 residues: Phenylalanine--tRNA ligase beta subunit (590 aa).

The B5 domain maps to 276–382 (MELDVWDVPV…IMYNYDRFEP (107 aa)). Mg(2+)-binding residues include asparagine 360, aspartate 366, glutamate 369, and aspartate 370.

The protein belongs to the phenylalanyl-tRNA synthetase beta subunit family. Type 2 subfamily. In terms of assembly, tetramer of two alpha and two beta subunits. The cofactor is Mg(2+).

It localises to the cytoplasm. It carries out the reaction tRNA(Phe) + L-phenylalanine + ATP = L-phenylalanyl-tRNA(Phe) + AMP + diphosphate + H(+). This Methanopyrus kandleri (strain AV19 / DSM 6324 / JCM 9639 / NBRC 100938) protein is Phenylalanine--tRNA ligase beta subunit.